Here is a 56-residue protein sequence, read N- to C-terminus: Ferredoxin (56 aa).

2 4Fe-4S ferredoxin-type domains span residues 2 to 29 (AYVINDSCISCGACEPECPVNAITAGDD) and 29 to 56 (DKYVIDAATCIDCGACAGVCPVDAPQPE). [4Fe-4S] cluster-binding residues include cysteine 9, cysteine 12, cysteine 15, cysteine 19, cysteine 38, cysteine 41, cysteine 44, and cysteine 48.

Requires [4Fe-4S] cluster as cofactor.

Functionally, ferredoxins are iron-sulfur proteins that transfer electrons in a wide variety of metabolic reactions. In Acetoanaerobium sticklandii (strain ATCC 12662 / DSM 519 / JCM 1433 / CCUG 9281 / NCIMB 10654 / HF) (Clostridium sticklandii), this protein is Ferredoxin.